The following is a 268-amino-acid chain: Tryptophan synthase alpha chain (268 aa).

Catalysis depends on proton acceptor residues glutamate 49 and aspartate 60.

The protein belongs to the TrpA family. Tetramer of two alpha and two beta chains.

The catalysed reaction is (1S,2R)-1-C-(indol-3-yl)glycerol 3-phosphate + L-serine = D-glyceraldehyde 3-phosphate + L-tryptophan + H2O. The protein operates within amino-acid biosynthesis; L-tryptophan biosynthesis; L-tryptophan from chorismate: step 5/5. Functionally, the alpha subunit is responsible for the aldol cleavage of indoleglycerol phosphate to indole and glyceraldehyde 3-phosphate. The protein is Tryptophan synthase alpha chain of Pseudomonas aeruginosa (strain ATCC 15692 / DSM 22644 / CIP 104116 / JCM 14847 / LMG 12228 / 1C / PRS 101 / PAO1).